Reading from the N-terminus, the 128-residue chain is Large ribosomal subunit protein bL17 (128 aa).

The protein belongs to the bacterial ribosomal protein bL17 family. Part of the 50S ribosomal subunit. Contacts protein L32.

This is Large ribosomal subunit protein bL17 from Streptococcus pyogenes serotype M5 (strain Manfredo).